The sequence spans 378 residues: Acetylornithine deacetylase (378 aa).

H76 contacts Zn(2+). The active site involves D78. A Zn(2+)-binding site is contributed by D108. Residue E140 is part of the active site. E141, E165, and H351 together coordinate Zn(2+).

It belongs to the peptidase M20A family. ArgE subfamily. In terms of assembly, homodimer. It depends on Zn(2+) as a cofactor. The cofactor is Co(2+). Glutathione is required as a cofactor.

The protein localises to the cytoplasm. It carries out the reaction N(2)-acetyl-L-ornithine + H2O = L-ornithine + acetate. It participates in amino-acid biosynthesis; L-arginine biosynthesis; L-ornithine from N(2)-acetyl-L-ornithine (linear): step 1/1. Its function is as follows. Catalyzes the hydrolysis of the amide bond of N(2)-acetylated L-amino acids. Cleaves the acetyl group from N-acetyl-L-ornithine to form L-ornithine, an intermediate in L-arginine biosynthesis pathway, and a branchpoint in the synthesis of polyamines. This is Acetylornithine deacetylase from Aliivibrio salmonicida (strain LFI1238) (Vibrio salmonicida (strain LFI1238)).